Reading from the N-terminus, the 123-residue chain is MALNKEDILTWLEEAKTSEVVELITAIEEKFGVTAAAVAVAAGPGPAAGGVEEQTEFDVMLVSFGDSKINVIKEVRAITGLGLGEAKALVESAPKAVKEGVSKSDAEEIKKKLEAVGAKVEIK.

The protein belongs to the bacterial ribosomal protein bL12 family. Homodimer. Part of the ribosomal stalk of the 50S ribosomal subunit. Forms a multimeric L10(L12)X complex, where L10 forms an elongated spine to which 2 to 4 L12 dimers bind in a sequential fashion. Binds GTP-bound translation factors.

Forms part of the ribosomal stalk which helps the ribosome interact with GTP-bound translation factors. Is thus essential for accurate translation. This is Large ribosomal subunit protein bL12 from Borrelia duttonii (strain Ly).